The sequence spans 390 residues: Pyruvate dehydrogenase E1 component subunit alpha, somatic form, mitochondrial (390 aa).

A mitochondrion-targeting transit peptide spans 1–29; sequence MRKMLAAVSRVLSGASQKPASRVLVASRN. Lys-63 carries the post-translational modification N6-acetyllysine; alternate. Lys-63 carries the N6-succinyllysine; alternate modification. Positions 92, 118, 119, 157, 165, 167, 196, 197, 198, 225, and 227 each coordinate pyruvate. The thiamine diphosphate site is built by Tyr-118 and Arg-119. 6 residues coordinate thiamine diphosphate: Gly-165, Val-167, Asp-196, Gly-197, Ala-198, and Asn-225. Asp-196 contacts Mg(2+). Positions 225 and 227 each coordinate Mg(2+). Residue Ser-232 is modified to Phosphoserine; by PDK1. Lys-244 carries the N6-acetyllysine; alternate modification. Lys-244 carries the post-translational modification N6-succinyllysine; alternate. Residue Lys-277 is modified to N6-succinyllysine. His-292 lines the thiamine diphosphate pocket. A Phosphoserine; by PDK1, PDK2, PDK3 and PDK4 modification is found at Ser-293. Ser-295 is subject to Phosphoserine. Ser-300 carries the phosphoserine; by PDK1, PDK2, PDK3 and PDK4 modification. Tyr-301 bears the Phosphotyrosine mark. Position 313 is an N6-acetyllysine; alternate (Lys-313). Lys-313 carries the N6-succinyllysine; alternate modification. N6-acetyllysine is present on residues Lys-321 and Lys-336. Lys-385 carries the N6-succinyllysine modification.

Heterotetramer of two PDHA1 and two PDHB subunits. The heterotetramer interacts with DLAT, and is part of the multimeric pyruvate dehydrogenase complex that contains multiple copies of pyruvate dehydrogenase (E1), dihydrolipoamide acetyltransferase (DLAT, E2) and lipoamide dehydrogenase (DLD, E3). These subunits are bound to an inner core composed of about 48 DLAT and 12 PDHX molecules. Requires thiamine diphosphate as cofactor. Mg(2+) is required as a cofactor. In terms of processing, phosphorylation at Ser-232, Ser-293 and Ser-300 by PDK family kinases inactivates the enzyme; for this phosphorylation at a single site is sufficient. Phosphorylation at Ser-293 interferes with access to active site, and thereby inactivates the enzyme. Dephosphorylation at all three sites, i.e. at Ser-232, Ser-293 and Ser-300, is required for reactivation. Post-translationally, acetylation alters the phosphorylation pattern. Deacetylated by SIRT3.

The protein localises to the mitochondrion matrix. The enzyme catalyses N(6)-[(R)-lipoyl]-L-lysyl-[protein] + pyruvate + H(+) = N(6)-[(R)-S(8)-acetyldihydrolipoyl]-L-lysyl-[protein] + CO2. Pyruvate dehydrogenase activity is inhibited by phosphorylation of PDHA1; it is reactivated by dephosphorylation. Functionally, the pyruvate dehydrogenase complex catalyzes the overall conversion of pyruvate to acetyl-CoA and CO(2), and thereby links the glycolytic pathway to the tricarboxylic cycle. The sequence is that of Pyruvate dehydrogenase E1 component subunit alpha, somatic form, mitochondrial (PDHA1) from Macaca fascicularis (Crab-eating macaque).